The sequence spans 195 residues: PBAN-type neuropeptides (195 aa).

The signal sequence occupies residues methionine 1–glycine 33. A propeptide spanning residues glutamate 34 to isoleucine 63 is cleaved from the precursor. Leucine amide is present on leucine 80. The propeptide occupies alanine 86–glutamate 117. At glutamine 120 the chain carries Pyrrolidone carboxylic acid. Leucine 128 carries the leucine amide modification. Positions glutamate 131–glutamine 153 are excised as a propeptide. Residues leucine 163 and leucine 175 each carry the leucine amide modification. A propeptide spanning residues glutamine 178 to phenylalanine 195 is cleaved from the precursor.

It belongs to the pyrokinin family.

The protein localises to the secreted. In terms of biological role, a hormone that controls sex pheromone production in females and pheromone responsiveness in male. Also mediates visceral muscle contractile activity (myotropic activity). This Apis mellifera (Honeybee) protein is PBAN-type neuropeptides.